The primary structure comprises 109 residues: Large ribosomal subunit protein P1 (109 aa).

The interval 90 to 109 is disordered; sequence AAAKKEEEEEDDDMGFGLFD.

This sequence belongs to the eukaryotic ribosomal protein P1/P2 family. In terms of assembly, P1 and P2 exist as dimers at the large ribosomal subunit.

In terms of biological role, plays an important role in the elongation step of protein synthesis. This chain is Large ribosomal subunit protein P1, found in Trypanosoma cruzi.